The following is a 632-amino-acid chain: MSASTSTSTAASQDACYISLLGLAEYFRTSQPPNIKKCIQCLQALFTFMPPSKVEARTHLQMGQILMAYTKNIDLARQHLEKAWSISEPLPNFDVKFDTASLLAQLHLQTDRNSHQAKAMLRRAVELSQNNVYWHCKLLLQLAQIHASDREYSLASELLAVGAESADEASATYLKVLFLLSRAMILMIERKTNDVLALLNSAGQIIDNNIPNPHQKEYLKVFFLVLQVCYYLALGQVKTVKPSLKQLQMSIQTIMAPNWPSDEAIFGANQLEMFVWLPKEQLYVLVYLVTVSHSMMAGYMDKAQKYTEKALTQIEKLKQQEDKPILSVFKVILLEHIVMCRMVMGNRELAIREIAAARDVCMAAPQRSLLRRHSAQLHCLIGLYSMSTNLFEHAERQFVVCVSETSERDLKLFANLNLAIIYLRTKRDTDLKQILDAVSTENTHTYSSQALMGGFYYVQGLHAFHKNSFHEAKRFLRETLKMANAEDLNRLTSCSLVLLSHVFLSIGNSKESMNMVTPAMQLASKIPDIHVQLWGSAILKDLHRMSKDVQHEKDAYANHVKYSENLIADQRKCVQSAHHELVNWFQGDPPVTSGPPAAPVLLMPESSVTASVPVIASTSTAMQPAGQYGQFY.

2 TPR repeats span residues 453-486 and 493-526; these read GGFYYVQGLHAFHKNSFHEAKRFLRETLKMANAE and SCSLVLLSHVFLSIGNSKESMNMVTPAMQLASKI.

This sequence belongs to the SCC4/mau-2 family. As to quaternary structure, interacts with Nipped-B to form the cohesin loading complex.

The protein resides in the nucleus. It is found in the nucleoplasm. Functionally, required for association of the cohesin complex with chromatin during interphase. Plays a role in sister chromatid cohesion and normal progression through prometaphase. The protein is MAU2 chromatid cohesion factor homolog of Drosophila melanogaster (Fruit fly).